Here is a 301-residue protein sequence, read N- to C-terminus: Zinc finger protein LEE1 (301 aa).

A disordered region spans residues 1 to 25 (MDAFENMSVSNHPGGNARRNSQSAN). Over residues 7-25 (MSVSNHPGGNARRNSQSAN) the composition is skewed to polar residues. A phosphoserine mark is found at Ser21 and Ser30. 2 consecutive C3H1-type zinc fingers follow at residues 87-114 (DYSH…HSPD) and 123-145 (PCKY…HVLP). The residue at position 282 (Ser282) is a Phosphoserine.

This is Zinc finger protein LEE1 (LEE1) from Saccharomyces cerevisiae (strain ATCC 204508 / S288c) (Baker's yeast).